The following is a 200-amino-acid chain: Small ribosomal subunit protein uS4 (200 aa).

The S4 RNA-binding domain occupies 92–155 (SRLDAVVYSL…QNLDIIKESV (64 aa)).

Belongs to the universal ribosomal protein uS4 family. As to quaternary structure, part of the 30S ribosomal subunit. Contacts protein S5. The interaction surface between S4 and S5 is involved in control of translational fidelity.

One of the primary rRNA binding proteins, it binds directly to 16S rRNA where it nucleates assembly of the body of the 30S subunit. Functionally, with S5 and S12 plays an important role in translational accuracy. The chain is Small ribosomal subunit protein uS4 from Staphylococcus haemolyticus (strain JCSC1435).